Consider the following 427-residue polypeptide: ATP-dependent RNA helicase DDX39A (427 aa).

The segment covering 1–19 (MAEQDVENELLDYDEDEEP) has biased composition (acidic residues). Residues 1 to 36 (MAEQDVENELLDYDEDEEPQAPQESTPAPPKKDVKG) form a disordered region. A2 carries the post-translational modification N-acetylalanine. K31 participates in a covalent cross-link: Glycyl lysine isopeptide (Lys-Gly) (interchain with G-Cter in SUMO2). At K35 the chain carries N6-acetyllysine; alternate. Residue K35 forms a Glycyl lysine isopeptide (Lys-Gly) (interchain with G-Cter in SUMO2); alternate linkage. S37 bears the Phosphoserine mark. Positions 44–72 (SGFRDFLLKPELLRAIVDCGFEHPSEVQH) match the Q motif motif. Residues 75 to 248 (IPQAILGMDV…RKFMQDPMEV (174 aa)) enclose the Helicase ATP-binding domain. 88–95 (AKSGMGKT) serves as a coordination point for ATP. Residues K154 and K162 each participate in a glycyl lysine isopeptide (Lys-Gly) (interchain with G-Cter in SUMO2) cross-link. Residue T171 is modified to Phosphothreonine. The short motif at 195–198 (DECD) is the DECD box element. Glycyl lysine isopeptide (Lys-Gly) (interchain with G-Cter in SUMO2) cross-links involve residues K240 and K255. In terms of domain architecture, Helicase C-terminal spans 260 to 421 (GLQQYYVKLK…ELPEEIDIST (162 aa)). Position 426 is a phosphoserine (S426).

Belongs to the DEAD box helicase family. DECD subfamily. In terms of assembly, binds ALYREF/THOC4 and DDX39B/BAT1. Interacts with the apo-AREX complex component SARNP. Interacts with MX1. Interacts with MCM3AP isoform GANP. Interacts with ECD. Interacts with PHAX; this interaction stimulates PHAX RNA binding activity. In terms of processing, SUMOylated by RANBP2; SUMOylation modification affects its ability to bind RNA.

It is found in the nucleus. Its subcellular location is the cytoplasm. The enzyme catalyses ATP + H2O = ADP + phosphate + H(+). Its function is as follows. Helicase that plays an essential role in mRNA export and is involved in multiple steps in RNA metabolism including alternative splicing. Regulates nuclear mRNA export to the cytoplasm through association with ECD. Also involved in spliceosomal uridine-rich small nuclear RNA (U snRNA) export by stimulating the RNA binding of adapter PHAX. Plays a role in the negative regulation of type I IFN production by increasing the nuclear retention of antiviral transcripts and thus reducing their protein expression. Independently of the interferon pathway, plays an antiviral role against alphaviruses by binding to a 5' conserved sequence element in the viral genomic RNA. The protein is ATP-dependent RNA helicase DDX39A of Mus musculus (Mouse).